Consider the following 101-residue polypeptide: Movement protein (101 aa).

Residues 1-22 (MDPQNSFLLQPRVPTAAPTSGG) form a disordered region. A helical transmembrane segment spans residues 30-50 (EVAILSFVGLICFYLLYLWVL). The interval 79–101 (NPIPNTQAPPSQGNPGPFVPGTG) is disordered. The span at 80-92 (PIPNTQAPPSQGN) shows a compositional bias: polar residues.

The protein belongs to the mastrevirus movement protein family. Interacts with the capsid protein (CP). Part of a MP-CP-viral DNA complex.

The protein localises to the host membrane. Its function is as follows. Involved in the viral transport within, and between cells. The protein is Movement protein of Avena sativa (Oat).